Consider the following 235-residue polypeptide: Phosphoribosylaminoimidazole-succinocarboxamide synthase (235 aa).

The protein belongs to the SAICAR synthetase family.

The catalysed reaction is 5-amino-1-(5-phospho-D-ribosyl)imidazole-4-carboxylate + L-aspartate + ATP = (2S)-2-[5-amino-1-(5-phospho-beta-D-ribosyl)imidazole-4-carboxamido]succinate + ADP + phosphate + 2 H(+). It participates in purine metabolism; IMP biosynthesis via de novo pathway; 5-amino-1-(5-phospho-D-ribosyl)imidazole-4-carboxamide from 5-amino-1-(5-phospho-D-ribosyl)imidazole-4-carboxylate: step 1/2. This Streptococcus pneumoniae serotype 2 (strain D39 / NCTC 7466) protein is Phosphoribosylaminoimidazole-succinocarboxamide synthase.